We begin with the raw amino-acid sequence, 208 residues long: Large ribosomal subunit protein bL25 (208 aa).

Residues valine 184 to aspartate 208 form a disordered region. The span at serine 187–aspartate 208 shows a compositional bias: low complexity.

Belongs to the bacterial ribosomal protein bL25 family. CTC subfamily. As to quaternary structure, part of the 50S ribosomal subunit; part of the 5S rRNA/L5/L18/L25 subcomplex. Contacts the 5S rRNA. Binds to the 5S rRNA independently of L5 and L18.

Its function is as follows. This is one of the proteins that binds to the 5S RNA in the ribosome where it forms part of the central protuberance. The sequence is that of Large ribosomal subunit protein bL25 from Ehrlichia ruminantium (strain Gardel).